The chain runs to 76 residues: Sec-independent protein translocase protein TatA (76 aa).

A helical membrane pass occupies residues 1 to 21 (MGSFSIWHWLIVLAVVLLLFG). Positions 43 to 76 (MSDEDAKDDARDSGRTIDAKADETVNDVKKTTKS) are disordered. Residues 50-76 (DDARDSGRTIDAKADETVNDVKKTTKS) show a composition bias toward basic and acidic residues.

This sequence belongs to the TatA/E family. As to quaternary structure, the Tat system comprises two distinct complexes: a TatABC complex, containing multiple copies of TatA, TatB and TatC subunits, and a separate TatA complex, containing only TatA subunits. Substrates initially bind to the TatABC complex, which probably triggers association of the separate TatA complex to form the active translocon.

Its subcellular location is the cell inner membrane. Part of the twin-arginine translocation (Tat) system that transports large folded proteins containing a characteristic twin-arginine motif in their signal peptide across membranes. TatA could form the protein-conducting channel of the Tat system. This is Sec-independent protein translocase protein TatA from Brucella anthropi (strain ATCC 49188 / DSM 6882 / CCUG 24695 / JCM 21032 / LMG 3331 / NBRC 15819 / NCTC 12168 / Alc 37) (Ochrobactrum anthropi).